The chain runs to 440 residues: 23S rRNA (uracil(1939)-C(5))-methyltransferase RlmD (440 aa).

Residues 10 to 68 (KALPTQAVEITIDNLDHHLTGVGRYQGKACFVEGVLPGEKVSVQITEQKKQYAHARLRQ) enclose the TRAM domain. Residues Cys81, Cys87, Cys90, and Cys169 each coordinate [4Fe-4S] cluster. Residues Gln272, Phe301, Asn306, Glu322, Asp349, and Asp372 each contribute to the S-adenosyl-L-methionine site. Cys398 acts as the Nucleophile in catalysis.

It belongs to the class I-like SAM-binding methyltransferase superfamily. RNA M5U methyltransferase family. RlmD subfamily.

It carries out the reaction uridine(1939) in 23S rRNA + S-adenosyl-L-methionine = 5-methyluridine(1939) in 23S rRNA + S-adenosyl-L-homocysteine + H(+). Catalyzes the formation of 5-methyl-uridine at position 1939 (m5U1939) in 23S rRNA. In Tolumonas auensis (strain DSM 9187 / NBRC 110442 / TA 4), this protein is 23S rRNA (uracil(1939)-C(5))-methyltransferase RlmD.